The following is a 529-amino-acid chain: Peptide chain release factor 3 (529 aa).

A tr-type G domain is found at 11 to 280 (AKRRTFAIIS…GLVAWAPAPM (270 aa)). Residues 20-27 (SHPDAGKT), 88-92 (DTPGH), and 142-145 (NKLD) contribute to the GTP site.

The protein belongs to the TRAFAC class translation factor GTPase superfamily. Classic translation factor GTPase family. PrfC subfamily.

Its subcellular location is the cytoplasm. Increases the formation of ribosomal termination complexes and stimulates activities of RF-1 and RF-2. It binds guanine nucleotides and has strong preference for UGA stop codons. It may interact directly with the ribosome. The stimulation of RF-1 and RF-2 is significantly reduced by GTP and GDP, but not by GMP. The chain is Peptide chain release factor 3 from Edwardsiella ictaluri (strain 93-146).